Consider the following 319-residue polypeptide: Thioredoxin reductase 1 (319 aa).

FAD contacts are provided by residues 11–14, 40–41, Q45, N54, V87, C145, D288, and 295–297; these read SGPA, IA, and RQA. A disulfide bridge connects residues C142 and C145. A Phosphoserine modification is found at S303.

The protein belongs to the class-II pyridine nucleotide-disulfide oxidoreductase family. In terms of assembly, homodimer. It depends on FAD as a cofactor.

The protein localises to the cytoplasm. The protein resides in the mitochondrion intermembrane space. It catalyses the reaction [thioredoxin]-dithiol + NADP(+) = [thioredoxin]-disulfide + NADPH + H(+). Its function is as follows. Central component in the thioredoxin system. Reduces thioredoxins 1 and 2. The sequence is that of Thioredoxin reductase 1 (TRR1) from Saccharomyces cerevisiae (strain ATCC 204508 / S288c) (Baker's yeast).